The sequence spans 413 residues: DNA primase large subunit PriL (413 aa).

The [4Fe-4S] cluster site is built by Cys230, Cys301, Cys310, and Cys317. 3 stretches are compositionally biased toward basic and acidic residues: residues 340 to 356 (MEKE…QEEK), 362 to 381 (KEKQ…EEKG), and 388 to 413 (KKRE…KKRI). The interval 340–413 (MEKEKEEKEE…KEKQEEKKRI (74 aa)) is disordered.

It belongs to the eukaryotic-type primase large subunit family. In terms of assembly, heterodimer of a small subunit (PriS) and a large subunit (PriL). [4Fe-4S] cluster serves as cofactor.

In terms of biological role, regulatory subunit of DNA primase, an RNA polymerase that catalyzes the synthesis of short RNA molecules used as primers for DNA polymerase during DNA replication. Stabilizes and modulates the activity of the small subunit, increasing the rate of DNA synthesis, and conferring RNA synthesis capability. The DNA polymerase activity may enable DNA primase to also catalyze primer extension after primer synthesis. May also play a role in DNA repair. This is DNA primase large subunit PriL from Methanosarcina barkeri (strain Fusaro / DSM 804).